The primary structure comprises 546 residues: Phosphatidylinositol 4-phosphate 5-kinase type-1 alpha (546 aa).

The 369-residue stretch at 66-434 (TSSALKGAIQ…RFQRFMCNTV (369 aa)) folds into the PIPK domain. Residue K88 forms a Glycyl lysine isopeptide (Lys-Gly) (interchain with G-Cter in ubiquitin) linkage. Disordered stretches follow at residues 442–475 (PSPT…SGEH) and 491–518 (LGRP…PSFS). Low complexity-rich tracts occupy residues 450–462 (SGPS…GPSG) and 509–518 (GSPVPGPSFS).

As to quaternary structure, interacts with RAC1. Interacts with TUT1. Forms a complex with CDH1/E-cadherin, CTNNB1/beta-catenin and CTNND1 at the plasma membrane upon calcium stimulation. Found in a ternary complex with IRS1 and DGKZ in the absence of insulin stimulation. Interacts with DGKZ. Interacts with PIP4K2C; the interaction inhibits PIP5K1A kinase activity. In terms of tissue distribution, highest expression in brain. Also detected in skeletal muscle, testis, brain and lung.

The protein localises to the cell membrane. The protein resides in the cytoplasm. Its subcellular location is the nucleus. It localises to the nucleus speckle. It is found in the cell projection. The protein localises to the ruffle. The protein resides in the lamellipodium. It catalyses the reaction a 1,2-diacyl-sn-glycero-3-phospho-(1D-myo-inositol 4-phosphate) + ATP = a 1,2-diacyl-sn-glycero-3-phospho-(1D-myo-inositol-4,5-bisphosphate) + ADP + H(+). The catalysed reaction is 1-octadecanoyl-2-(5Z,8Z,11Z,14Z)-eicosatetraenoyl-sn-glycero-3-phospho-1D-myo-inositol 4-phosphate + ATP = 1-octadecanoyl-2-(5Z,8Z,11Z,14Z)-eicosatetraenoyl-sn-glycero-3-phospho-1D-myo-inositol 4,5-bisphosphate + ADP + H(+). It carries out the reaction 1,2-dihexadecanoyl-sn-glycero-3-phospho-(1D-myo-inositol-4-phosphate) + ATP = 1,2-dihexadecanoyl-sn-glycero-3-phospho-(1D-myo-inositol-4,5-bisphosphate) + ADP + H(+). The enzyme catalyses 1-octadecanoyl-2-(9Z)-octadecenoyl-sn-glycero-3-phospho-1D-myo-inositol 4-phosphate + ATP = 1-octadecanoyl-2-(9Z)-octadecenoyl-sn-glycero-3-phospho-1D-myo-inositol 4,5-bisphosphate + ADP + H(+). It catalyses the reaction 1-octadecanoyl-2-(9Z)-octadecenoyl-sn-glycero-3-phospho-1D-myo-inositol + ATP = 1-octadecanoyl-2-(9Z)-octadecenoyl-sn-glycero-3-phospho-1D-myo-inositol 5-phosphate + ADP + H(+). The catalysed reaction is 1-octadecanoyl-2-(9Z,12Z)-octadecadienoyl-sn-glycero-3-phospho-1D-myo-inositol + ATP = 1-octadecanoyl-2-(9Z,12Z)-octadecadienoyl-sn-glycero-3-phospho-1D-myo-inositol 5-phosphate + ADP + H(+). It carries out the reaction 1-octadecanoyl-2-(5Z,8Z,11Z,14Z-eicosatetraenoyl)-sn-glycero-3-phospho-(1D-myo-inositol) + ATP = 1-octadecanoyl-2-(5Z,8Z,11Z,14Z)-eicosatetraenoyl-sn-glycero-3-phospho-1D-myo-inositol 5-phosphate + ADP + H(+). The enzyme catalyses 1,2-di-(9Z,12Z)-octadecadienoyl-sn-glycero-3-phospho-1D-myo-inositol + ATP = 1,2-di(9Z,12Z)-octadecadienoyl-sn-glycero-3-phospho-1D-myo-inositol 5-phosphate + ADP + H(+). Activated by phosphatidic acid. Its function is as follows. Catalyzes the phosphorylation of phosphatidylinositol 4-phosphate (PtdIns(4)P/PI4P) to form phosphatidylinositol 4,5-bisphosphate (PtdIns(4,5)P2/PIP2), a lipid second messenger that regulates several cellular processes such as signal transduction, vesicle trafficking, actin cytoskeleton dynamics, cell adhesion, and cell motility. PtdIns(4,5)P2 can directly act as a second messenger or can be utilized as a precursor to generate other second messengers: inositol 1,4,5-trisphosphate (IP3), diacylglycerol (DAG) or phosphatidylinositol-3,4,5-trisphosphate (PtdIns(3,4,5)P3/PIP3). PIP5K1A-mediated phosphorylation of PtdIns(4)P is the predominant pathway for PtdIns(4,5)P2 synthesis. Can also use phosphatidylinositol (PtdIns) as substrate in vitro. Together with PIP5K1C, is required for phagocytosis, both enzymes regulating different types of actin remodeling at sequential steps. Promotes particle ingestion by activating the WAS GTPase-binding protein that induces Arp2/3 dependent actin polymerization at the nascent phagocytic cup. Together with PIP5K1B, is required, after stimulation by G-protein coupled receptors, for the synthesis of IP3 that will induce stable platelet adhesion. Recruited to the plasma membrane by the E-cadherin/beta-catenin complex where it provides the substrate PtdIns(4,5)P2 for the production of PtdIns(3,4,5)P3, IP3 and DAG, that will mobilize internal calcium and drive keratinocyte differentiation. Positively regulates insulin-induced translocation of SLC2A4 to the cell membrane in adipocytes. Together with PIP5K1C has a role during embryogenesis. Independently of its catalytic activity, is required for membrane ruffling formation, actin organization and focal adhesion formation during directional cell migration by controlling integrin-induced translocation of the small GTPase RAC1 to the plasma membrane. Also functions in the nucleus where it acts as an activator of TUT1 adenylyltransferase activity in nuclear speckles, thereby regulating mRNA polyadenylation of a select set of mRNAs. The protein is Phosphatidylinositol 4-phosphate 5-kinase type-1 alpha of Mus musculus (Mouse).